The sequence spans 327 residues: uncharacterized protein (327 aa).

4 consecutive transmembrane segments (helical) span residues Ser68–Pro88, Phe92–Phe112, Trp127–Ala147, and Ile148–Leu168.

The protein localises to the cell membrane. In terms of biological role, may act as a negative regulator for the transcription of mutY, fabL, sspE and yfhP. This is an uncharacterized protein from Bacillus subtilis (strain 168).